The primary structure comprises 362 residues: Notoamide biosynthesis cluster protein J' (362 aa).

A signal peptide spans 1–22 (MRNMATMLHLLTLILLTSPAST). 4 N-linked (GlcNAc...) asparagine glycosylation sites follow: asparagine 157, asparagine 190, asparagine 280, and asparagine 338.

Its function is as follows. Part of the gene cluster that mediates the biosynthesis of notoamide, a fungal indole alkaloid that belongs to a family of natural products containing a characteristic bicyclo[2.2.2]diazaoctane core. The first step of notoamide biosynthesis involves coupling of L-proline and L-tryptophan by the bimodular NRPS notE', to produce cyclo-L-tryptophan-L-proline called brevianamide F. The reverse prenyltransferase notF' then acts as a deoxybrevianamide E synthase and converts brevianamide F to deoxybrevianamide E via reverse prenylation at C-2 of the indole ring leading to the bicyclo[2.2.2]diazaoctane core. Deoxybrevianamide E is further hydroxylated at C-6 of the indole ring, likely catalyzed by the cytochrome P450 monooxygenase notG', to yield 6-hydroxy-deoxybrevianamide E. 6-hydroxy-deoxybrevianamide E is a specific substrate of the prenyltransferase notC' for normal prenylation at C-7 to produce 6-hydroxy-7-prenyl-deoxybrevianamide, also called notoamide S. As the proposed pivotal branching point in notoamide biosynthesis, notoamide S can be diverted to notoamide E through an oxidative pyran ring closure putatively catalyzed by either notH' cytochrome P450 monooxygenase or the notD' FAD-linked oxidoreductase. This step would be followed by an indole 2,3-epoxidation-initiated pinacol-like rearrangement catalyzed by the notB' FAD-dependent monooxygenase leading to the formation of notoamide C and notoamide D. On the other hand notoamide S is converted to notoamide T by notH' (or notD'), a bifunctional oxidase that also functions as the intramolecular Diels-Alderase responsible for generation of (-)-notoamide T. To generate antipodal (+)-notoaminide T, notH (or notD) in Aspergillus strain MF297-2 is expected to catalyze a Diels-Alder reaction leading to the opposite stereochemistry. The remaining oxidoreductase notD' (or notH') likely catalyzes the oxidative pyran ring formation to yield (-)-stephacidin A. The FAD-dependent monooxygenase notI' is highly similar to notB' and is predicted to catalyze a similar conversion from (-)-stephacidin A to (+)-notoamide B via the 2,3-epoxidation of (-)-stephacidin A followed by a pinacol-type rearrangement. Finally, it remains unclear which enzyme could be responsible for the final hydroxylation steps leading to notoamide A and sclerotiamide. The function of notJ' in the notoamide biosynthesis has not been determined yet. This is Notoamide biosynthesis cluster protein J' from Aspergillus versicolor.